Consider the following 98-residue polypeptide: Alpha-elicitin MGM-alpha (98 aa).

3 cysteine pairs are disulfide-bonded: Cys-3-Cys-71, Cys-27-Cys-56, and Cys-51-Cys-95.

It belongs to the elicitin family.

It is found in the secreted. In terms of biological role, induces local and distal defense responses (incompatible hypersensitive reaction) in plants from the solanaceae and cruciferae families. Elicits leaf necrosis and causes the accumulation of pathogenesis-related proteins. Might interact with the lipidic molecules of the plasma membrane. The protein is Alpha-elicitin MGM-alpha of Phytophthora megasperma (Potato pink rot fungus).